The sequence spans 367 residues: Epoxide hydrolase 3 (367 aa).

The helical transmembrane segment at 22–42 (ALVMSLVYLAALVAAFVYSCI) threads the bilayer. D180 serves as the catalytic Nucleophile. Y288 functions as the Proton donor in the catalytic mechanism. H344 acts as the Proton acceptor in catalysis.

This sequence belongs to the AB hydrolase superfamily. Epoxide hydrolase family. In terms of tissue distribution, predominantly expressed in skin, esophagus, lung and tongue and to a lesser extent in pancreas and eye.

The protein localises to the microsome membrane. The catalysed reaction is an epoxide + H2O = an ethanediol. The enzyme catalyses 9,10-epoxyoctadecanoate + H2O = 9,10-dihydroxyoctadecanoate. It catalyses the reaction 9,10-epoxy-(12Z)-octadecenoate + H2O = 9,10-dihydroxy-(12Z)-octadecenoate. It carries out the reaction 8,9-epoxy-(5Z,11Z,14Z)-eicosatrienoate + H2O = 8,9-dihydroxy-(5Z,11Z,14Z)-eicosatrienoate. The catalysed reaction is 11,12-epoxy-(5Z,8Z,14Z)-eicosatrienoate + H2O = 11,12-dihydroxy-(5Z,8Z,14Z)-eicosatrienoate. The enzyme catalyses 14,15-epoxy-(5Z,8Z,11Z)-eicosatrienoate + H2O = 14,15-dihydroxy-(5Z,8Z,11Z)-eicosatrienoate. With respect to regulation, inhibited by 1-(1-acetylpiperidin-4-yl)-3-(4-(trifl uoromethoxy)phenyl)urea (TPAU), 1-cyclohexyl-3-dodecylurea (CDU), 12-(3-adamantan-1-yl-ureido)-dodecanoic acid (AUDA), 1-((3S, 5S, 7S)-adamantan-1-yl)-3-(5-(2-(2-ethoxyethoxy) ethoxy)pentyl)urea (AEPU) and to a lesser extent by 8-(3-((3S, 5S, 7S)-adamantan-1-yl)ureido) octanoic acid (AUOA). In terms of biological role, catalyzes the hydrolysis of epoxide-containing fatty acids. Active in vitro against epoxyeicosatrienoic acids (EETs) including 8,9-EET, 9,10-EET, 11,12-EET and 14,15-EET and leukotoxin. This Mus musculus (Mouse) protein is Epoxide hydrolase 3 (Ephx3).